We begin with the raw amino-acid sequence, 134 residues long: Putative pre-16S rRNA nuclease (134 aa).

The protein belongs to the YqgF nuclease family.

It localises to the cytoplasm. Functionally, could be a nuclease involved in processing of the 5'-end of pre-16S rRNA. The chain is Putative pre-16S rRNA nuclease from Hydrogenovibrio crunogenus (strain DSM 25203 / XCL-2) (Thiomicrospira crunogena).